A 401-amino-acid chain; its full sequence is Argininosuccinate synthase (401 aa).

Residue Ala-9 to Ser-17 participates in ATP binding. Position 86 (Tyr-86) interacts with L-citrulline. Gly-116 lines the ATP pocket. Residues Thr-118, Asn-122, and Asp-123 each contribute to the L-aspartate site. Asn-122 is a binding site for L-citrulline. Arg-126, Ser-174, Ser-183, Glu-259, and Tyr-271 together coordinate L-citrulline.

The protein belongs to the argininosuccinate synthase family. Type 1 subfamily. In terms of assembly, homotetramer.

It localises to the cytoplasm. The catalysed reaction is L-citrulline + L-aspartate + ATP = 2-(N(omega)-L-arginino)succinate + AMP + diphosphate + H(+). The protein operates within amino-acid biosynthesis; L-arginine biosynthesis; L-arginine from L-ornithine and carbamoyl phosphate: step 2/3. The sequence is that of Argininosuccinate synthase from Bacillus cereus (strain Q1).